Here is a 360-residue protein sequence, read N- to C-terminus: Peptide chain release factor 1 (360 aa).

Residue glutamine 235 is modified to N5-methylglutamine. The span at alanine 284–threonine 293 shows a compositional bias: basic and acidic residues. The interval alanine 284–glutamine 314 is disordered.

It belongs to the prokaryotic/mitochondrial release factor family. Post-translationally, methylated by PrmC. Methylation increases the termination efficiency of RF1.

The protein localises to the cytoplasm. Functionally, peptide chain release factor 1 directs the termination of translation in response to the peptide chain termination codons UAG and UAA. In Erwinia tasmaniensis (strain DSM 17950 / CFBP 7177 / CIP 109463 / NCPPB 4357 / Et1/99), this protein is Peptide chain release factor 1.